The chain runs to 248 residues: Enolase-phosphatase E1 (248 aa).

Mg(2+)-binding residues include Asp-14 and Glu-16. Substrate-binding positions include 145–146 (SS) and Lys-179. A Mg(2+)-binding site is contributed by Asp-204.

This sequence belongs to the HAD-like hydrolase superfamily. MasA/MtnC family. As to quaternary structure, monomer. The cofactor is Mg(2+).

It localises to the cytoplasm. Its subcellular location is the nucleus. It catalyses the reaction 5-methylsulfanyl-2,3-dioxopentyl phosphate + H2O = 1,2-dihydroxy-5-(methylsulfanyl)pent-1-en-3-one + phosphate. It functions in the pathway amino-acid biosynthesis; L-methionine biosynthesis via salvage pathway; L-methionine from S-methyl-5-thio-alpha-D-ribose 1-phosphate: step 3/6. The protein operates within amino-acid biosynthesis; L-methionine biosynthesis via salvage pathway; L-methionine from S-methyl-5-thio-alpha-D-ribose 1-phosphate: step 4/6. Its function is as follows. Bifunctional enzyme that catalyzes the enolization of 2,3-diketo-5-methylthiopentyl-1-phosphate (DK-MTP-1-P) into the intermediate 2-hydroxy-3-keto-5-methylthiopentenyl-1-phosphate (HK-MTPenyl-1-P), which is then dephosphorylated to form the acireductone 1,2-dihydroxy-3-keto-5-methylthiopentene (DHK-MTPene). The protein is Enolase-phosphatase E1 of Caenorhabditis elegans.